A 559-amino-acid chain; its full sequence is 3-phosphoinositide-dependent protein kinase 1 (559 aa).

Phosphotyrosine; by SRC and INSR is present on Tyr9. Ser25 carries the phosphoserine modification. The disordered stretch occupies residues 25–83; it reads SPSMVRSQTEPSSSPGIPSGVSRQGSTMDGTTAEARPSTNPLQQHPAQLPPQPRKKRPE. A compositionally biased stretch (low complexity) spans 35–46; sequence PSSSPGIPSGVS. One can recognise a Protein kinase domain in the interval 85 to 345; that stretch reads FKFGKILGEG…YGPLKAHPFF (261 aa). ATP is bound by residues 95–97 and Lys114; that span reads SFS. The PIF-pocket stretch occupies residues 116–160; sequence LEKRHIIKENKVPYVTRERDVMSRLDHPFFVKLYFTFQDDEKLYF. ATP contacts are provided by residues 163–165 and Glu169; that span reads SYA. Catalysis depends on Asp208, which acts as the Proton acceptor. Positions 212 and 226 each coordinate ATP. Ser244 carries the post-translational modification Phosphoserine. Position 307 is an N6-acetyllysine (Lys307). Thr357 carries the phosphothreonine; by MELK modification. Residues Tyr376 and Tyr379 each carry the phosphotyrosine; by SRC and INSR modification. At Ser396 the chain carries Phosphoserine. Phosphoserine; by MAP3K5 is present on Ser397. Phosphoserine is present on Ser399. The residue at position 401 (Ser401) is a Phosphoserine; by MAP3K5. A Phosphoserine modification is found at Ser413. The PH domain occupies 462-553; sequence KMGPVDKRKG…EVWRQQYQSS (92 aa). Phosphoserine; by PKC/PRKCQ is present on Ser504. Thr516 bears the Phosphothreonine; by autocatalysis mark. Residue Ser532 is modified to Phosphoserine; by PKC/PRKCQ.

This sequence belongs to the protein kinase superfamily. AGC Ser/Thr protein kinase family. PDPK1 subfamily. Homodimer in its autoinhibited state. Active as monomer. Interacts with NPRL2, PPARG, PAK1, PTK2B, GRB14, PKN1 (via C-terminus), STRAP and IKKB. The Tyr-9 phosphorylated form interacts with SRC, RASA1 and CRK (via their SH2 domains). Interacts with SGK3 in a phosphorylation-dependent manner. The tyrosine-phosphorylated form interacts with PTPN6. The Ser-244 phosphorylated form interacts with YWHAH and YWHAQ. Binds INSR in response to insulin. Interacts (via PH domain) with SMAD3, SMAD4 and SMAD7. Interacts with PKN2; the interaction stimulates PDPK1 autophosphorylation, its PI(3,4,5)P3-dependent kinase activity toward 'Ser-473' of AKT1 but also activates its kinase activity toward PRKCD and PRKCZ. Phosphorylation on Ser-244 in the activation loop is required for full activity. PDPK1 itself can autophosphorylate Ser-244, leading to its own activation. Autophosphorylation is inhibited by the apoptotic C-terminus cleavage product of PKN2. Tyr-9 phosphorylation is critical for stabilization of both PDPK1 and the PDPK1/SRC complex via HSP90-mediated protection of PDPK1 degradation. Angiotensin II stimulates the tyrosine phosphorylation of PDPK1 in vascular smooth muscle in a calcium- and SRC-dependent manner. Phosphorylated on Tyr-9, Tyr-376 and Tyr-379 by INSR in response to insulin. Palmitate negatively regulates autophosphorylation at Ser-244 and palmitate-induced phosphorylation at Ser-532 and Ser-504 by PKC/PRKCQ negatively regulates its ability to phosphorylate PKB/AKT1. Phosphorylation at Thr-357 by MELK partially inhibits kinase activity, the inhibition is cooperatively enhanced by phosphorylation at Ser-397 and Ser-401 by MAP3K5. In terms of processing, monoubiquitinated in the kinase domain, deubiquitinated by USP4.

It localises to the cytoplasm. It is found in the nucleus. Its subcellular location is the cell membrane. The protein localises to the cell junction. The protein resides in the focal adhesion. The enzyme catalyses L-seryl-[protein] + ATP = O-phospho-L-seryl-[protein] + ADP + H(+). It catalyses the reaction L-threonyl-[protein] + ATP = O-phospho-L-threonyl-[protein] + ADP + H(+). Homodimerization regulates its activity by maintaining the kinase in an autoinhibitory conformation. NPRL2 down-regulates its activity by interfering with tyrosine phosphorylation at the Tyr-9, Tyr-376 and Tyr-379 residues. The 14-3-3 protein YWHAQ acts as a negative regulator by association with the residues surrounding the Ser-244 residue. STRAP positively regulates its activity by enhancing its autophosphorylation and by stimulating its dissociation from YWHAQ. SMAD2, SMAD3, SMAD4 and SMAD7 also positively regulate its activity by stimulating its dissociation from YWHAQ. Activated by phosphorylation on Tyr-9, Tyr-376 and Tyr-379 by INSR in response to insulin. In terms of biological role, serine/threonine kinase which acts as a master kinase, phosphorylating and activating a subgroup of the AGC family of protein kinases. Its targets include: protein kinase B (PKB/AKT1, PKB/AKT2, PKB/AKT3), p70 ribosomal protein S6 kinase (RPS6KB1), p90 ribosomal protein S6 kinase (RPS6KA1, RPS6KA2 and RPS6KA3), cyclic AMP-dependent protein kinase (PRKACA), protein kinase C (PRKCD and PRKCZ), serum and glucocorticoid-inducible kinase (SGK1, SGK2 and SGK3), p21-activated kinase-1 (PAK1), TSSK3, protein kinase PKN (PKN1 and PKN2). Plays a central role in the transduction of signals from insulin by providing the activating phosphorylation to PKB/AKT1, thus propagating the signal to downstream targets controlling cell proliferation and survival, as well as glucose and amino acid uptake and storage. Negatively regulates the TGF-beta-induced signaling by: modulating the association of SMAD3 and SMAD7 with TGF-beta receptor, phosphorylating SMAD2, SMAD3, SMAD4 and SMAD7, preventing the nuclear translocation of SMAD3 and SMAD4 and the translocation of SMAD7 from the nucleus to the cytoplasm in response to TGF-beta. Activates PPARG transcriptional activity and promotes adipocyte differentiation. Activates the NF-kappa-B pathway via phosphorylation of IKKB. The tyrosine phosphorylated form is crucial for the regulation of focal adhesions by angiotensin II. Controls proliferation, survival, and growth of developing pancreatic cells. Participates in the regulation of Ca(2+) entry and Ca(2+)-activated K(+) channels of mast cells. Essential for the motility of vascular endothelial cells (ECs) and is involved in the regulation of their chemotaxis. Plays a critical role in cardiac homeostasis by serving as a dual effector for cell survival and beta-adrenergic response. Plays an important role during thymocyte development by regulating the expression of key nutrient receptors on the surface of pre-T cells and mediating Notch-induced cell growth and proliferative responses. Provides negative feedback inhibition to toll-like receptor-mediated NF-kappa-B activation in macrophages. The chain is 3-phosphoinositide-dependent protein kinase 1 (Pdpk1) from Rattus norvegicus (Rat).